The primary structure comprises 210 residues: Large ribosomal subunit protein uL4 (210 aa).

Belongs to the universal ribosomal protein uL4 family. Part of the 50S ribosomal subunit.

One of the primary rRNA binding proteins, this protein initially binds near the 5'-end of the 23S rRNA. It is important during the early stages of 50S assembly. It makes multiple contacts with different domains of the 23S rRNA in the assembled 50S subunit and ribosome. Functionally, forms part of the polypeptide exit tunnel. This is Large ribosomal subunit protein uL4 (rplD) from Thermus thermophilus.